A 196-amino-acid polypeptide reads, in one-letter code: Histone H1.0 (196 aa).

Disordered regions lie at residues 1 to 29 (MTEN…PKYS) and 78 to 196 (SGTL…GRKK). The 74-residue stretch at 24–97 (DHPKYSDMIL…GASGSFRLAK (74 aa)) folds into the H15 domain. Residues 104–196 (PAKKPKKEIK…ASPKKSGRKK (93 aa)) are compositionally biased toward basic residues.

It belongs to the histone H1/H5 family.

The protein resides in the nucleus. It is found in the chromosome. Functionally, histones H1 are necessary for the condensation of nucleosome chains into higher-order structures. The histones H1.0 are found in cells that are in terminal stages of differentiation or that have low rates of cell division. This chain is Histone H1.0 (h1-0), found in Xenopus tropicalis (Western clawed frog).